We begin with the raw amino-acid sequence, 32 residues long: uncharacterized protein (32 aa).

This is an uncharacterized protein from Schizosaccharomyces pombe (strain 972 / ATCC 24843) (Fission yeast).